Consider the following 171-residue polypeptide: Cytochrome c oxidase subunit 4 isoform 2, mitochondrial (171 aa).

A mitochondrion-targeting transit peptide spans 1 to 28 (MLPRAAWSLVLRKGGGGRRGMHSSEGTT). The tract at residues 13–32 (KGGGGRRGMHSSEGTTRGGG) is disordered. The Mitochondrial matrix portion of the chain corresponds to 29–100 (RGGGKMSPYT…TFAEMNRRSN (72 aa)). Residues 101–126 (EWKTVMGCVFFFIGFAALVIWWQRVY) form a helical membrane-spanning segment. Residues 127 to 171 (VFPPKPITLTDERKAQQLQRMLDMKVNPVQGLASRWDYEKKQWKK) lie on the Mitochondrial intermembrane side of the membrane.

Belongs to the cytochrome c oxidase IV family. As to quaternary structure, component of the cytochrome c oxidase (complex IV, CIV), a multisubunit enzyme composed of 14 subunits. The complex is composed of a catalytic core of 3 subunits MT-CO1, MT-CO2 and MT-CO3, encoded in the mitochondrial DNA, and 11 supernumerary subunits COX4I1 (or COX4I2), COX5A, COX5B, COX6A1 (or COX6A2), COX6B1 (or COX6B2), COX6C, COX7A2 (or COX7A1), COX7B, COX7C, COX8A and NDUFA4, which are encoded in the nuclear genome. The complex exists as a monomer or a dimer and forms supercomplexes (SCs) in the inner mitochondrial membrane with NADH-ubiquinone oxidoreductase (complex I, CI) and ubiquinol-cytochrome c oxidoreductase (cytochrome b-c1 complex, complex III, CIII), resulting in different assemblies (supercomplex SCI(1)III(2)IV(1) and megacomplex MCI(2)III(2)IV(2)). As to expression, highly expressed in lung.

The protein resides in the mitochondrion inner membrane. Its pathway is energy metabolism; oxidative phosphorylation. Functionally, component of the cytochrome c oxidase, the last enzyme in the mitochondrial electron transport chain which drives oxidative phosphorylation. The respiratory chain contains 3 multisubunit complexes succinate dehydrogenase (complex II, CII), ubiquinol-cytochrome c oxidoreductase (cytochrome b-c1 complex, complex III, CIII) and cytochrome c oxidase (complex IV, CIV), that cooperate to transfer electrons derived from NADH and succinate to molecular oxygen, creating an electrochemical gradient over the inner membrane that drives transmembrane transport and the ATP synthase. Cytochrome c oxidase is the component of the respiratory chain that catalyzes the reduction of oxygen to water. Electrons originating from reduced cytochrome c in the intermembrane space (IMS) are transferred via the dinuclear copper A center (CU(A)) of subunit 2 and heme A of subunit 1 to the active site in subunit 1, a binuclear center (BNC) formed by heme A3 and copper B (CU(B)). The BNC reduces molecular oxygen to 2 water molecules using 4 electrons from cytochrome c in the IMS and 4 protons from the mitochondrial matrix. In Homo sapiens (Human), this protein is Cytochrome c oxidase subunit 4 isoform 2, mitochondrial.